Reading from the N-terminus, the 339-residue chain is Tetraacyldisaccharide 4'-kinase (339 aa).

58–65 (TVGGSGKT) provides a ligand contact to ATP.

It belongs to the LpxK family.

It catalyses the reaction a lipid A disaccharide + ATP = a lipid IVA + ADP + H(+). It participates in glycolipid biosynthesis; lipid IV(A) biosynthesis; lipid IV(A) from (3R)-3-hydroxytetradecanoyl-[acyl-carrier-protein] and UDP-N-acetyl-alpha-D-glucosamine: step 6/6. Transfers the gamma-phosphate of ATP to the 4'-position of a tetraacyldisaccharide 1-phosphate intermediate (termed DS-1-P) to form tetraacyldisaccharide 1,4'-bis-phosphate (lipid IVA). The sequence is that of Tetraacyldisaccharide 4'-kinase from Shewanella baltica (strain OS195).